The sequence spans 533 residues: Calcitonin receptor (533 aa).

Positions 1-41 are cleaved as a signal peptide; that stretch reads MTPRRSRVKRRNLRKPKMRFLLVNRFTLLLLLLVSPTPVLQ. The Extracellular segment spans residues 42–163; it reads APTNLTDSGL…FTSEKLQNAY (122 aa). N-linked (GlcNAc...) asparagine glycosylation is found at Asn45, Asn90, Asn142, and Asn147. Disulfide bonds link Cys72–Cys98, Cys89–Cys129, and Cys112–Cys151. A helical transmembrane segment spans residues 164–186; that stretch reads VLYYLALVGHSLSIAALVASMLI. Over 187-198 the chain is Cytoplasmic; that stretch reads FWIFKNLSCQRV. A helical membrane pass occupies residues 199–219; that stretch reads TLHKHMFLTYILNSIIIIIHL. At 220-273 the chain is on the extracellular side; it reads VEVVPNGDLVRRDPMHIFHHNTHMWTMQWELSPPLPLSAHEGKMDPHASEVISC. Cys273 and Cys343 are joined by a disulfide. Residues 274–296 form a helical membrane-spanning segment; sequence KVLHFLHQYMMSCNYFWMLCEGI. Residues 297–313 lie on the Cytoplasmic side of the membrane; it reads YLHTLIVMAVFTDEQRL. The chain crosses the membrane as a helical span at residues 314 to 334; sequence RWYYLLGWGFPIVPTIIHAIT. Over 335 to 350 the chain is Extracellular; that stretch reads RALYYNDNCWLSAETH. Residues 351–374 form a helical membrane-spanning segment; it reads LLYIIHGPVMVALVVNFFFLLNIV. The Cytoplasmic segment spans residues 375–394; it reads RVLVTKMRQTHEAESYMYLK. Residues 395-413 form a helical membrane-spanning segment; that stretch reads AVKATMVLVPLLGIQFVVF. Residues 414–421 lie on the Extracellular side of the membrane; the sequence is PWRPSNKV. Residues 422–448 form a helical membrane-spanning segment; the sequence is LGKIYDYLMHSLIHFQGFFVATIYCFC. The Cytoplasmic portion of the chain corresponds to 449–533; that stretch reads NHEVQVTLKR…MNVIQQDASA (85 aa).

The protein belongs to the G-protein coupled receptor 2 family. In terms of assembly, heterodimer of CALCR and RAMP1, RAMP2 or RAMP3; the receptor complexes function as AMYR1, AMYR2 and AMYR3 receptors, respectively, and respond to amylin/IAPP, calcitonin/CT and CGRP1 ligands. Interacts with GPRASP2.

Its subcellular location is the cell membrane. In terms of biological role, g protein-coupled receptor activated by ligand peptides amylin (IAPP), calcitonin (CT/CALCA) and calcitonin gene-related peptide type 1 (CGRP1/CALCA). CALCR interacts with receptor-activity-modifying proteins RAMP1, 2 and 3 to form receptor complexes AMYR1, 2 and 3, respectively. IAPP, CT and CGRP1 activate CALCR and AMYRs with distinct modes of receptor activation resulting in specific phenotypes. Ligand binding causes a conformation change that triggers signaling via guanine nucleotide-binding proteins (G proteins) and modulates the activity of downstream effectors. Activates cAMP-dependent pathway. The polypeptide is Calcitonin receptor (Mus musculus (Mouse)).